Reading from the N-terminus, the 360-residue chain is Pyrimidine monooxygenase RutA (360 aa).

Residues 49-50 (IK), Asn115, Glu124, 140-141 (RY), and Ser190 each bind FMN.

It belongs to the NtaA/SnaA/DszA monooxygenase family. RutA subfamily.

The catalysed reaction is uracil + FMNH2 + NADH + O2 = (Z)-3-ureidoacrylate + FMN + NAD(+) + H2O + H(+). The enzyme catalyses thymine + FMNH2 + NADH + O2 = (Z)-2-methylureidoacrylate + FMN + NAD(+) + H2O + H(+). In terms of biological role, catalyzes the pyrimidine ring opening between N-3 and C-4 by an unusual flavin hydroperoxide-catalyzed mechanism, adding oxygen atoms in the process to yield ureidoacrylate peracid, that immediately reacts with FMN forming ureidoacrylate and FMN-N(5)-oxide. The FMN-N(5)-oxide reacts spontaneously with NADH to produce FMN. Requires the flavin reductase RutF to regenerate FMN in vivo. This chain is Pyrimidine monooxygenase RutA, found in Pseudomonas syringae pv. syringae (strain B728a).